We begin with the raw amino-acid sequence, 403 residues long: Alkaline protease 1 (403 aa).

The N-terminal stretch at 1–21 (MLSIKRTLLLLGAVLPAVFGA) is a signal peptide. Positions 22 to 125 (PVQETRRAAQ…QIWYIDALTT (104 aa)) are excised as a propeptide. The Inhibitor I9 domain maps to 36–120 (KYIVTFKPGT…HVEEDQIWYI (85 aa)). In terms of domain architecture, Peptidase S8 spans 130–403 (PWGLGSISHK…PNKLAYNGNA (274 aa)). Catalysis depends on charge relay system residues Asp162 and His193. N-linked (GlcNAc...) asparagine glycans are attached at residues Asn253 and Asn307. Ser349 (charge relay system) is an active-site residue.

This sequence belongs to the peptidase S8 family.

It localises to the secreted. It carries out the reaction Hydrolysis of proteins with broad specificity, and of Bz-Arg-OEt &gt; Ac-Tyr-OEt. Does not hydrolyze peptide amides.. Its function is as follows. Secreted alkaline protease that allows assimilation of proteinaceous substrates. This chain is Alkaline protease 1 (alp1), found in Neosartorya fischeri (strain ATCC 1020 / DSM 3700 / CBS 544.65 / FGSC A1164 / JCM 1740 / NRRL 181 / WB 181) (Aspergillus fischerianus).